The sequence spans 268 residues: MNTKEISKVVDLVRESNPLVHNITNVVVTNFTANGLLALGASPVMAYAKEEVAEMASIAGALVLNMGTLRPDEVEAMLLAGKSANRNDVPVLFDPVGAGATSYRTEVARHIPAEIELAIIRGNAAEIANVINEKWEIKGVDAGAGNGNVVSIAKQAADELNTVAVITGKEDVVTDGERTIVIRNGHSILTKITGTGCLLTSVIGAFVAVEKDYVKAAVAALTFYGVAAELAAAKTVEKGPGSFQIEFLNQLANTTSGDIEKYGKIEVI.

Residue M45 coordinates substrate. ATP contacts are provided by R121 and T167. G194 contributes to the substrate binding site.

It belongs to the Thz kinase family. It depends on Mg(2+) as a cofactor.

The enzyme catalyses 5-(2-hydroxyethyl)-4-methylthiazole + ATP = 4-methyl-5-(2-phosphooxyethyl)-thiazole + ADP + H(+). It functions in the pathway cofactor biosynthesis; thiamine diphosphate biosynthesis; 4-methyl-5-(2-phosphoethyl)-thiazole from 5-(2-hydroxyethyl)-4-methylthiazole: step 1/1. Its function is as follows. Catalyzes the phosphorylation of the hydroxyl group of 4-methyl-5-beta-hydroxyethylthiazole (THZ). The chain is Hydroxyethylthiazole kinase from Bacillus anthracis (strain A0248).